The primary structure comprises 403 residues: Casein kinase II subunit alpha-2 (403 aa).

Residues 1–31 (MHLIFFFSYFLRRYLLLLCAILILRAPLAHS) form the signal peptide. Positions 104–389 (YEVVRKVGRG…AKEAMAHPYF (286 aa)) constitute a Protein kinase domain. Residues 110–118 (VGRGKYSEV) and Lys-133 contribute to the ATP site. N-linked (GlcNAc...) asparagine glycosylation is present at Asn-182. Asp-221 serves as the catalytic Proton acceptor.

Belongs to the protein kinase superfamily. Ser/Thr protein kinase family. CK2 subfamily. Heterotetramer of two catalytic alpha subunits and two regulatory beta subunits. In terms of tissue distribution, seems to be present in all plant organs. But seems to be more expressed than CKA1.

It localises to the nucleus. The protein resides in the nucleolus. It catalyses the reaction L-seryl-[protein] + ATP = O-phospho-L-seryl-[protein] + ADP + H(+). It carries out the reaction L-threonyl-[protein] + ATP = O-phospho-L-threonyl-[protein] + ADP + H(+). Casein kinases are operationally defined by their preferential utilization of acidic proteins such as caseins as substrates. The alpha chain contains the catalytic site. The tetrameric holoenzyme CK2, composed of two alpha and two beta subunits, phosphorylates the transcription factor PIF1 after an exposure to light, resulting in a proteasome-dependent degradation of PIF1 and promotion of photomorphogenesis. CK2 phosphorylates translation initiation factors. May participate in the regulation of the initiation of translation. Acts as circadian clock component that maintains the correct period length through phosphorylation of CCA1. May act as an ectokinase that phosphorylates several extracellular proteins. The polypeptide is Casein kinase II subunit alpha-2 (Arabidopsis thaliana (Mouse-ear cress)).